Here is a 424-residue protein sequence, read N- to C-terminus: Histone-binding protein RBBP7 (424 aa).

WD repeat units follow at residues 47-121 (QWLP…KINH), 127-172 (RARY…LRLR), 180-216 (GLSWNSNLKGHLLSASDDHTVCLWDISAGPKEGKIVD), 227-268 (VVED…HSVD), 274-311 (VNCLSFNPYSEFILATGSADKTVALWDLRNLKLKLHSF), 317-368 (EIFQ…LFIH), and 375-402 (ISDFSWNPNEPWVICSVSEDNIMQIWQM). The interaction with HAT1 stretch occupies residues 359 to 404 (DGPPELLFIHGGHTAKISDFSWNPNEPWVICSVSEDNIMQIWQMAE).

Belongs to the WD repeat RBAP46/RBAP48/MSI1 family. As to quaternary structure, binds directly to helix 1 of the histone fold of histone H4, a region that is not accessible when H4 is in chromatin. Also interacts with histone H2B and HAT1.

The protein resides in the nucleus. Its function is as follows. Core histone-binding subunit that may target chromatin remodeling factors, histone acetyltransferases and histone deacetylases to their histone substrates in a manner that is regulated by nucleosomal DNA. Component of several complexes which regulate chromatin metabolism. This is Histone-binding protein RBBP7 (RBBP7) from Gallus gallus (Chicken).